We begin with the raw amino-acid sequence, 347 residues long: Haptoglobin (347 aa).

The N-terminal stretch at 1-18 is a signal peptide; the sequence is MRALGAVVTLLLWGQLFA. Residues 31–88 enclose the Sushi domain; the sequence is DSCPKPPEIANGYVEHLVRYRCRQFYRLRAEGDGVYTLNDEKQWMNTVAGEKLPECEA. 4 disulfides stabilise this stretch: cysteine 52–cysteine 86, cysteine 90–cysteine 207, cysteine 250–cysteine 281, and cysteine 292–cysteine 322. Residues 103–345 enclose the Peptidase S1 domain; that stretch reads IIGGSMDAKG…LKDWVQETMA (243 aa). N-linked (GlcNAc...) asparagine glycans are attached at residues asparagine 148, asparagine 182, and asparagine 264. An interaction with CD163 region spans residues 259-264; the sequence is VPEKKN.

Belongs to the peptidase S1 family. As to quaternary structure, tetramer of two alpha and two beta chains; disulfide-linked. The hemoglobin/haptoglobin complex is composed of a haptoglobin dimer bound to two hemoglobin alpha-beta dimers. Interacts with CD163. Interacts with ERGIC3. Expressed by the liver and secreted in plasma.

The protein localises to the secreted. Functionally, as a result of hemolysis, hemoglobin is found to accumulate in the kidney and is secreted in the urine. Haptoglobin captures, and combines with free plasma hemoglobin to allow hepatic recycling of heme iron and to prevent kidney damage. Haptoglobin also acts as an antioxidant, has antibacterial activity and plays a role in modulating many aspects of the acute phase response. Hemoglobin/haptoglobin complexes are rapidly cleared by the macrophage CD163 scavenger receptor expressed on the surface of liver Kupfer cells through an endocytic lysosomal degradation pathway. This chain is Haptoglobin (Hp), found in Mus caroli (Ryukyu mouse).